Reading from the N-terminus, the 323-residue chain is Beta-ketoacyl-[acyl-carrier-protein] synthase III (323 aa).

Active-site residues include Cys112 and His250. Residues 251–255 (QANQR) form an ACP-binding region. Residue Asn280 is part of the active site.

This sequence belongs to the thiolase-like superfamily. FabH family. As to quaternary structure, homodimer.

It is found in the cytoplasm. The enzyme catalyses malonyl-[ACP] + acetyl-CoA + H(+) = 3-oxobutanoyl-[ACP] + CO2 + CoA. It functions in the pathway lipid metabolism; fatty acid biosynthesis. In terms of biological role, catalyzes the condensation reaction of fatty acid synthesis by the addition to an acyl acceptor of two carbons from malonyl-ACP. Catalyzes the first condensation reaction which initiates fatty acid synthesis and may therefore play a role in governing the total rate of fatty acid production. Possesses both acetoacetyl-ACP synthase and acetyl transacylase activities. Its substrate specificity determines the biosynthesis of branched-chain and/or straight-chain of fatty acids. The polypeptide is Beta-ketoacyl-[acyl-carrier-protein] synthase III (Oenococcus oeni (strain ATCC BAA-331 / PSU-1)).